The chain runs to 329 residues: 4-hydroxythreonine-4-phosphate dehydrogenase (329 aa).

The substrate site is built by H136 and T137. A divalent metal cation contacts are provided by H166, H211, and H266. Substrate-binding residues include K274, N283, and R292.

This sequence belongs to the PdxA family. As to quaternary structure, homodimer. It depends on Zn(2+) as a cofactor. The cofactor is Mg(2+). Requires Co(2+) as cofactor.

It localises to the cytoplasm. The enzyme catalyses 4-(phosphooxy)-L-threonine + NAD(+) = 3-amino-2-oxopropyl phosphate + CO2 + NADH. The protein operates within cofactor biosynthesis; pyridoxine 5'-phosphate biosynthesis; pyridoxine 5'-phosphate from D-erythrose 4-phosphate: step 4/5. Functionally, catalyzes the NAD(P)-dependent oxidation of 4-(phosphooxy)-L-threonine (HTP) into 2-amino-3-oxo-4-(phosphooxy)butyric acid which spontaneously decarboxylates to form 3-amino-2-oxopropyl phosphate (AHAP). The sequence is that of 4-hydroxythreonine-4-phosphate dehydrogenase from Shigella sonnei (strain Ss046).